Reading from the N-terminus, the 271-residue chain is Aminoglycoside 3'-phosphotransferase (271 aa).

The Proton acceptor role is filled by Asp198.

The protein belongs to the aminoglycoside phosphotransferase family.

The enzyme catalyses kanamycin A + ATP = kanamycin 3'-phosphate + ADP + H(+). Resistance to kanamycin and structurally-related aminoglycosides, including amikacin. This is Aminoglycoside 3'-phosphotransferase (aphA) from Escherichia coli.